We begin with the raw amino-acid sequence, 444 residues long: Xaa-Pro dipeptidase (444 aa).

5 residues coordinate Mn(2+): D247, D258, H340, E385, and E424.

The protein belongs to the peptidase M24B family. Bacterial-type prolidase subfamily. Requires Mn(2+) as cofactor.

The enzyme catalyses Xaa-L-Pro dipeptide + H2O = an L-alpha-amino acid + L-proline. Splits dipeptides with a prolyl residue in the C-terminal position. The polypeptide is Xaa-Pro dipeptidase (Proteus mirabilis (strain HI4320)).